A 36-amino-acid chain; its full sequence is Photosystem I reaction center subunit VIII (36 aa).

A helical membrane pass occupies residues 8–28 (AILVPIVGLVFPALSMALFFI).

This sequence belongs to the PsaI family.

Its subcellular location is the plastid. It is found in the chloroplast thylakoid membrane. In terms of biological role, may help in the organization of the PsaL subunit. This Phaeodactylum tricornutum (strain CCAP 1055/1) protein is Photosystem I reaction center subunit VIII.